The following is a 343-amino-acid chain: MATRWTLSQAQALFETPFLELMFEAQQIHRHYFDPRQVQVSTLLSIKTGACPEDCKYCPQSARYKTGLEAERLMEVEEVLSSARKAKAAGSGRFCMGAAWKNPHERDMPYLEKMVQGVKEMGMETCMTLGSLSEQQAQRLAHAGLDFYNHNLDTSPEFYGSIITTRSYQERLDTLGKVREAGIKVCSGGIVGLGETVQDRAGLLVQLANLPEPPESVPINMLVKVKGTPMADNDDVDPFDFVRTIAVARIMMPRSHVRLSAGREQMSEQTQAMCFMAGANSIFYGCKLLTTPNPDEDKDLLLFRKLGLNPRHGTTESGDNAQQQALAAQLLSADTEQFYNAAR.

Residues 36-254 enclose the Radical SAM core domain; that stretch reads RQVQVSTLLS…IAVARIMMPR (219 aa). [4Fe-4S] cluster contacts are provided by Cys-51, Cys-55, and Cys-58. 4 residues coordinate [2Fe-2S] cluster: Cys-95, Cys-126, Cys-186, and Arg-258.

This sequence belongs to the radical SAM superfamily. Biotin synthase family. In terms of assembly, homodimer. Requires [4Fe-4S] cluster as cofactor. It depends on [2Fe-2S] cluster as a cofactor.

The catalysed reaction is (4R,5S)-dethiobiotin + (sulfur carrier)-SH + 2 reduced [2Fe-2S]-[ferredoxin] + 2 S-adenosyl-L-methionine = (sulfur carrier)-H + biotin + 2 5'-deoxyadenosine + 2 L-methionine + 2 oxidized [2Fe-2S]-[ferredoxin]. Its pathway is cofactor biosynthesis; biotin biosynthesis; biotin from 7,8-diaminononanoate: step 2/2. Its function is as follows. Catalyzes the conversion of dethiobiotin (DTB) to biotin by the insertion of a sulfur atom into dethiobiotin via a radical-based mechanism. This chain is Biotin synthase, found in Erwinia tasmaniensis (strain DSM 17950 / CFBP 7177 / CIP 109463 / NCPPB 4357 / Et1/99).